Here is a 331-residue protein sequence, read N- to C-terminus: Nucleoporin Nup35 (331 aa).

2 disordered regions span residues 1 to 63 and 79 to 110; these read MEPM…HELN and AHTA…GLFD. Polar residues-rich tracts occupy residues 8-20, 35-56, and 84-104; these read SPVN…QTQY, HKNT…SPGG, and GANS…TGPP. In terms of domain architecture, RRM Nup35-type spans 187 to 268; it reads RLSDFWVTIF…SRCTDRSVID (82 aa).

Belongs to the Nup35 family. Interacts with Nup154.

Its subcellular location is the nucleus. The protein localises to the nuclear pore complex. Its function is as follows. Functions as a component of the nuclear pore complex (NPC). May have a role in the organization of the inner nuclear membrane proteins at the nuclear envelope together with Nup154. The polypeptide is Nucleoporin Nup35 (Drosophila melanogaster (Fruit fly)).